Consider the following 556-residue polypeptide: PPE family protein PPE2 (556 aa).

The tract at residues 8 to 164 (ASPPEVHSAL…ASYQAVSTAA (157 aa)) is PPE. The interval 201 to 256 (QKIGYTDFYNNVIQPFINWLTNLPFLQAMFSGFDPWLPSLGNPLTFLSPANIAFAL) is SH3-like. The tract at residues 319-340 (LEQTLALLPAALPLLAAPLAPL) is leucine zipper motif. Disordered stretches follow at residues 385–418 (TPTP…PPVT) and 443–556 (GTGV…TRVE). A compositionally biased stretch (pro residues) spans 400 to 417 (PTPPLGPPPPPVTAPPPV). Residues 456 to 471 (AEAPASAAAPEEQVQP) are compositionally biased toward low complexity. Positions 472 to 481 (QRRRRPKIKQ) are enriched in basic residues. The Nuclear localization signal motif lies at 473 to 481 (RRRRPKIKQ).

The protein belongs to the mycobacterial PPE family.

The protein localises to the secreted. It localises to the host cytoplasm. It is found in the host nucleus. Inhibits nitric oxide (NO) production in activated macrophages. Acts by inhibiting expression of the host inducible nitric oxide synthase (iNOS). PPE2 is translocated into the host macrophage nucleus, where it interacts with a GATA-binding site overlapping with the TATA box of NOS2 (iNOS) promoter, and strongly inhibits NOS2 gene transcription. Reduction in NO production in turn facilitates intracellular survival of the bacilli inside the macrophage. In addition, disrupts the assembly of NADPH oxidase complex, which inhibits NADPH oxidase-mediated reactive oxygen species (ROS) generation in macrophages and favors M.tuberculosis survival. Acts by interacting with NCF2, the cytosolic subunit of NADPH oxidase, and preventing translocation of NCF2 and NCF1 to the membrane, which causes a reduction of the functional assembly of NADPH oxidase complex and a decrease in NADPH oxidase activity. The protein is PPE family protein PPE2 (PPE2) of Mycobacterium tuberculosis (strain CDC 1551 / Oshkosh).